The following is a 253-amino-acid chain: Cholesterol ring-cleaving hydrolase IpdB subunit (253 aa).

Belongs to the 3-oxoacid CoA-transferase subunit B family. As to quaternary structure, heterotetramer composed of 2 IpdA subunits and 2 IpdB subunits.

It carries out the reaction (3E)-2-(2-carboxylatoethyl)-3-methyl-6-oxocyclohex-1-ene-1-carboxyl-CoA + H2O = 6-methyl-3,7-dioxodecanedioyl-CoA. It participates in steroid metabolism; cholesterol degradation. Its function is as follows. Involved in the final steps of cholesterol and steroid degradation. Opens the last steroid ring of cholesterol by catalyzing the hydrolysis of (3E)-2-(2-carboxylatoethyl)-3-methyl-6-oxocyclohex-1-ene-1-carboxyl-CoA (COCHEA-CoA) to 6-methyl-3,7-dioxodecanedioyl-CoA (MeDODA-CoA). The polypeptide is Cholesterol ring-cleaving hydrolase IpdB subunit (Rhodococcus jostii (strain RHA1)).